The primary structure comprises 79 residues: Protein S100-G (79 aa).

Ser-2 carries the post-translational modification N-acetylserine. EF-hand domains are found at residues 13 to 48 and 45 to 79; these read IFQKYAAKEGDPNQLSKEELKLLIQSEFPSLLKASS and KASSTLDNLFKELDKNGDGEVSYEEFEVFFKKLSQ. Residues Gln-26 and Glu-31 each coordinate Ca(2+). Ser-42 and Ser-47 each carry phosphoserine. Ca(2+) contacts are provided by Asp-58, Asn-60, Asp-62, Glu-64, and Glu-69.

The protein belongs to the S-100 family.

The chain is Protein S100-G (S100g) from Rattus norvegicus (Rat).